The sequence spans 85 residues: Sec-independent protein translocase protein TatA (85 aa).

A helical membrane pass occupies residues 1–21; the sequence is MGSFSIWHWLIVLVIIMMVFG. Residues 39–51 are compositionally biased toward basic and acidic residues; the sequence is FKDGMREGQEDKP. The disordered stretch occupies residues 39-85; sequence FKDGMREGQEDKPAGSQQPQQTAGQPPRELHDATTIDVEARDKSKQG. Polar residues predominate over residues 53–62; the sequence is GSQQPQQTAG. Positions 66-85 are enriched in basic and acidic residues; that stretch reads RELHDATTIDVEARDKSKQG.

It belongs to the TatA/E family. As to quaternary structure, the Tat system comprises two distinct complexes: a TatABC complex, containing multiple copies of TatA, TatB and TatC subunits, and a separate TatA complex, containing only TatA subunits. Substrates initially bind to the TatABC complex, which probably triggers association of the separate TatA complex to form the active translocon.

Its subcellular location is the cell inner membrane. Part of the twin-arginine translocation (Tat) system that transports large folded proteins containing a characteristic twin-arginine motif in their signal peptide across membranes. TatA could form the protein-conducting channel of the Tat system. This Ralstonia pickettii (strain 12J) protein is Sec-independent protein translocase protein TatA.